A 449-amino-acid chain; its full sequence is MNTLTAPLPMATDALSQFGHDAWWVIGLKAVLILVVLLLLTLFNIWFERRVVGRMQHRPGPNVNGPFGLLQSLADALKLIFKEGIIPKAADKAVYLIAPVIAVIPSFITFSVIPFGPEVTIPFTDTRTPLQLTDMPVAVLFVMAIASIGIYGIVLGGWSSGSTYSLLGGLRSSAQMISYEVAMGLALVAVFLYAGSMSTSEIVAAQDNLWYGLILVPSFVIYLIAMVGETNRAPFDLPEAEGELVGGFHTEYSSMTFALFFLAEYINMATVSAVATTLFLGGWHAPFWLDHAWAGANEGYWPLLWFLGKVLFFVFIFIWLRGTLPRLRYDQFMAFGWKRLIPVALVWIVAVATIRSISLDGGVDRRYLLIGIGALAVVFLVLFFIGGAAEEQPTTVPEAAPAGGYPVPPMPAGGPVRGAAVPLTFDRSSPIASSMPQPSAATRSAGEEI.

9 helical membrane-spanning segments follow: residues tryptophan 23–phenylalanine 43, alanine 93–isoleucine 113, valine 137–glycine 157, methionine 176–serine 196, leucine 209–glutamate 229, alanine 258–leucine 280, tyrosine 300–leucine 320, phenylalanine 332–alanine 352, and leucine 368–alanine 388. The segment covering arginine 427 to threonine 442 has biased composition (polar residues). The interval arginine 427–isoleucine 449 is disordered.

It belongs to the complex I subunit 1 family. NDH-1 is composed of 14 different subunits. Subunits NuoA, H, J, K, L, M, N constitute the membrane sector of the complex.

The protein resides in the cell membrane. The enzyme catalyses a quinone + NADH + 5 H(+)(in) = a quinol + NAD(+) + 4 H(+)(out). Functionally, NDH-1 shuttles electrons from NADH, via FMN and iron-sulfur (Fe-S) centers, to quinones in the respiratory chain. The immediate electron acceptor for the enzyme in this species is believed to be ubiquinone. Couples the redox reaction to proton translocation (for every two electrons transferred, four hydrogen ions are translocated across the cytoplasmic membrane), and thus conserves the redox energy in a proton gradient. This subunit may bind ubiquinone. This Nocardioides sp. (strain ATCC BAA-499 / JS614) protein is NADH-quinone oxidoreductase subunit H.